A 311-amino-acid chain; its full sequence is Catechol 1,2-dioxygenase (311 aa).

Position 164 (Y164) interacts with catechol. Fe cation-binding residues include Y164, Y200, H224, and H226. 224–226 (HIH) provides a ligand contact to catechol.

Belongs to the intradiol ring-cleavage dioxygenase family. Homodimer. The cofactor is Fe(3+).

The enzyme catalyses catechol + O2 = cis,cis-muconate + 2 H(+). Its pathway is aromatic compound metabolism; beta-ketoadipate pathway; 5-oxo-4,5-dihydro-2-furylacetate from catechol: step 1/3. The polypeptide is Catechol 1,2-dioxygenase (Acinetobacter baylyi (strain ATCC 33305 / BD413 / ADP1)).